We begin with the raw amino-acid sequence, 321 residues long: Bifunctional ligase/repressor BirA (321 aa).

Residues 22–41 (GEQLGETLGMSRAAINKHIQ) constitute a DNA-binding region (H-T-H motif). One can recognise a BPL/LPL catalytic domain in the interval 67–254 (LNAKQILGQL…ELRAALELFE (188 aa)). Biotin contacts are provided by residues 89 to 91 (STN), Gln112, 116 to 118 (RGR), and Lys183.

Belongs to the biotin--protein ligase family. In terms of assembly, monomer in solution. Interacts with BCCP. Homodimerizes to bind DNA. Interaction with the corepressor bio-5'-AMP increases dimerization.

It carries out the reaction biotin + L-lysyl-[protein] + ATP = N(6)-biotinyl-L-lysyl-[protein] + AMP + diphosphate + H(+). With respect to regulation, the switch between the enzymatic activity and the repressor activity is regulated by cellular demand for biotin. The switch occurs by swapping of protein interaction partners by holoBirA. In conditions of high biotin demand, holoBirA associates with apoBCCP to transfer biotin. In conditions of low biotin demand, holoBirA dimerizes, binds DNA and represses transcription of the biotin operon. Acts both as a biotin--[acetyl-CoA-carboxylase] ligase and a biotin-operon repressor. In the presence of ATP, BirA activates biotin to form the BirA-biotinyl-5'-adenylate (BirA-bio-5'-AMP or holoBirA) complex. HoloBirA can either transfer the biotinyl moiety to the biotin carboxyl carrier protein (BCCP) subunit of acetyl-CoA carboxylase, or bind to the biotin operator site and inhibit transcription of the operon. This Escherichia coli (strain K12) protein is Bifunctional ligase/repressor BirA.